The following is a 753-amino-acid chain: Ribosome biogenesis protein BOP1 homolog (753 aa).

Residues 1-155 (MTKRSKGANE…RNTVGNVPLK (155 aa)) form a disordered region. Basic and acidic residues-rich tracts occupy residues 7–18 (GANEDKLIETKS) and 30–41 (KPVEAESLKEED). Composition is skewed to acidic residues over residues 64 to 75 (DDFDSDFSDSED) and 83 to 109 (EDGD…DDDG). The span at 110–121 (SEHVGSDNNEEH) shows a compositional bias: basic and acidic residues. Acidic residues predominate over residues 122 to 142 (GSDEDSERGEAVEESDSSEDE). 6 WD repeats span residues 421–462 (GHTG…KVWQ), 464–502 (DEAI…DEEQ), 539–581 (RHFK…TQRL), 626–665 (TGLR…KPYK), 669–708 (NHPK…DLNQ), and 722–753 (SSKG…LYCH).

The protein belongs to the WD repeat BOP1/ERB1 family. As to quaternary structure, interacts with PES. Interacts with WDR12.

The protein resides in the nucleus. The protein localises to the nucleolus. It is found in the nucleoplasm. Its function is as follows. Required for maturation of ribosomal RNAs and formation of the large ribosomal subunit. Plays an essential role in cell growth and survival through its regulation of ribosome biogenesis and mitotic progression. The chain is Ribosome biogenesis protein BOP1 homolog from Arabidopsis thaliana (Mouse-ear cress).